A 40-amino-acid polypeptide reads, in one-letter code: Sulfur globule protein TR0 (40 aa).

To C.vinosum CV1 and CV2. As to quaternary structure, the protein envelope of the sulfur globules is composed of the three different proteins TR0, TR1 and TR2.

Its function is as follows. Structural protein of the sulfur globules, which are intracellular globules that serve for sulfur storage in purple sulfur bacteria. This is Sulfur globule protein TR0 from Thiocapsa roseopersicina.